The chain runs to 66 residues: Large ribosomal subunit protein uL29 (66 aa).

Belongs to the universal ribosomal protein uL29 family.

This Agrobacterium fabrum (strain C58 / ATCC 33970) (Agrobacterium tumefaciens (strain C58)) protein is Large ribosomal subunit protein uL29.